Here is a 228-residue protein sequence, read N- to C-terminus: UPF0758 protein CLB_3028 (228 aa).

An MPN domain is found at 106-228; it reads KISTPLDVSN…YVSMKEKGTI (123 aa). The Zn(2+) site is built by histidine 177, histidine 179, and aspartate 190. A JAMM motif motif is present at residues 177–190; that stretch reads HNHPSGDPTPSKED.

The protein belongs to the UPF0758 family.

This Clostridium botulinum (strain ATCC 19397 / Type A) protein is UPF0758 protein CLB_3028.